Here is a 227-residue protein sequence, read N- to C-terminus: PKHD-type hydroxylase PHZ_c0292 (227 aa).

Positions valine 78–serine 178 constitute a Fe2OG dioxygenase domain. Histidine 96, aspartate 98, and histidine 159 together coordinate Fe cation. Arginine 169 contacts 2-oxoglutarate.

Fe(2+) is required as a cofactor. Requires L-ascorbate as cofactor.

This Phenylobacterium zucineum (strain HLK1) protein is PKHD-type hydroxylase PHZ_c0292.